The sequence spans 471 residues: Variant surface glycoprotein ILTAT 1.21 (471 aa).

Positions M1–A21 are cleaved as a signal peptide. N-linked (GlcNAc...) asparagine glycosylation is found at N64 and N405. The disordered stretch occupies residues A406–A449. The span at P412–T431 shows a compositional bias: basic and acidic residues. N450 carries an N-linked (GlcNAc...) asparagine glycan. The GPI-anchor amidated serine moiety is linked to residue S454. Positions D455–F471 are cleaved as a propeptide — removed in mature form.

The protein localises to the cell membrane. In terms of biological role, VSG forms a coat on the surface of the parasite. The trypanosome evades the immune response of the host by expressing a series of antigenically distinct VSGs from an estimated 1000 VSG genes. This Trypanosoma brucei brucei protein is Variant surface glycoprotein ILTAT 1.21.